Consider the following 338-residue polypeptide: MAGSHPYLNPPDSTHPSPPSAPPSLRWHQCCQPSDATNGLLVALLGGGLPAGFVGPLSHMAYQASNLPSLELLICRCLFHLPIALLLKLRGDPLLGPPDIRGRAYFYALLNVLSIGCAYSAVQVVPAGNAATVRKGSSTVCSAVLTLCLESQGLSGYDWCGLLGSILGLIIIVGPGLWTLQEGITGVYTALGYGQAFVGGLALSLGLLVYRSLHFPSCLPTVAFLSGLVGLLGSVPGLFVLQPPVLPSDLPSWSCVGAVGILALVSFTCVSYAVTKAHPALVCAVLHSEVVVALILQYYMLHETVAPSDIVGAGVVLGSIAIITAWNLSCEREGKVEE.

Residues 1–25 are disordered; that stretch reads MAGSHPYLNPPDSTHPSPPSAPPSL. A run of 9 helical transmembrane segments spans residues 40 to 60, 67 to 87, 105 to 125, 160 to 180, 190 to 210, 221 to 241, 255 to 275, 281 to 301, and 310 to 330; these read LLVA…LSHM, LPSL…ALLL, YFYA…VQVV, CGLL…LWTL, ALGY…LLVY, TVAF…LFVL, CVGA…YAVT, LVCA…YYML, and IVGA…NLSC. The 126-residue stretch at 49-174 folds into the EamA 1 domain; the sequence is LPAGFVGPLS…SILGLIIIVG (126 aa). Residues 272 to 325 enclose the EamA 2 domain; that stretch reads YAVTKAHPALVCAVLHSEVVVALILQYYMLHETVAPSDIVGAGVVLGSIAIITA.

Belongs to the SLC35G solute transporter family. Expressed in placenta and testis.

Its subcellular location is the membrane. In Homo sapiens (Human), this protein is Solute carrier family 35 member G6 (SLC35G6).